The chain runs to 232 residues: MTNADPHELQKFSDLAHRWWDPNAEFKPLHDLNPVRLAWIDSHAHLAGKRALDVGCGGGILSESMAGLGAQVKGIDLSTEALGVADLHSLESGITVDYEAIAAEAIAAREPGTYDVVTCMEMLEHVPSPADIVAACATLVKPGGWVFFSTLNRNLKSYLFAVIGAEYIAQMLPKGTHDYARFIRPSELAGFVRATDLHIVEIKGITYHPLGKRFALSNDTDINYLVACRRAA.

Residues Arg36, Gly55, Asp76, and Met120 each contribute to the S-adenosyl-L-methionine site.

This sequence belongs to the methyltransferase superfamily. UbiG/COQ3 family.

It carries out the reaction a 3-demethylubiquinol + S-adenosyl-L-methionine = a ubiquinol + S-adenosyl-L-homocysteine + H(+). It catalyses the reaction a 3-(all-trans-polyprenyl)benzene-1,2-diol + S-adenosyl-L-methionine = a 2-methoxy-6-(all-trans-polyprenyl)phenol + S-adenosyl-L-homocysteine + H(+). It functions in the pathway cofactor biosynthesis; ubiquinone biosynthesis. Functionally, O-methyltransferase that catalyzes the 2 O-methylation steps in the ubiquinone biosynthetic pathway. The sequence is that of Ubiquinone biosynthesis O-methyltransferase from Burkholderia multivorans (strain ATCC 17616 / 249).